Consider the following 241-residue polypeptide: 3-deoxy-D-manno-octulosonic acid kinase (241 aa).

Residue aspartate 171 is part of the active site.

This sequence belongs to the protein kinase superfamily. KdkA/RfaP family.

The protein resides in the cell inner membrane. The enzyme catalyses an alpha-Kdo-(2-&gt;6)-lipid IVA + ATP = a 4-O-phospho-alpha-Kdo-(2-&gt;6)-lipid IVA + ADP + H(+). The protein operates within bacterial outer membrane biogenesis; LPS core biosynthesis. In terms of biological role, catalyzes the ATP-dependent phosphorylation of the 3-deoxy-D-manno-octulosonic acid (Kdo) residue in Kdo-lipid IV(A) at the 4-OH position. This chain is 3-deoxy-D-manno-octulosonic acid kinase, found in Haemophilus influenzae (strain 86-028NP).